The following is a 150-amino-acid chain: Transcriptional regulator MraZ (150 aa).

SpoVT-AbrB domains follow at residues 6-52 (EFFN…PYQE) and 80-126 (AVEC…NRTK).

This sequence belongs to the MraZ family. In terms of assembly, forms oligomers.

The protein resides in the cytoplasm. It localises to the nucleoid. The protein is Transcriptional regulator MraZ of Syntrophotalea carbinolica (strain DSM 2380 / NBRC 103641 / GraBd1) (Pelobacter carbinolicus).